The primary structure comprises 374 residues: Chaperone protein DnaJ (374 aa).

The region spanning 6 to 71 (DYYAVLEVTR…QKRAAYDRFG (66 aa)) is the J domain. The segment at 130–209 (GVKKPITVPT…CHGAGTVERE (80 aa)) adopts a CR-type zinc-finger fold. The Zn(2+) site is built by Cys-143, Cys-146, Cys-161, Cys-164, Cys-183, Cys-186, Cys-197, and Cys-200. CXXCXGXG motif repeat units lie at residues 143–150 (CESCEGTG), 161–168 (CPTCHGAG), 183–190 (CPTCHGAG), and 197–204 (CAACHGAG).

It belongs to the DnaJ family. In terms of assembly, homodimer. Zn(2+) serves as cofactor.

It localises to the cytoplasm. Functionally, participates actively in the response to hyperosmotic and heat shock by preventing the aggregation of stress-denatured proteins and by disaggregating proteins, also in an autonomous, DnaK-independent fashion. Unfolded proteins bind initially to DnaJ; upon interaction with the DnaJ-bound protein, DnaK hydrolyzes its bound ATP, resulting in the formation of a stable complex. GrpE releases ADP from DnaK; ATP binding to DnaK triggers the release of the substrate protein, thus completing the reaction cycle. Several rounds of ATP-dependent interactions between DnaJ, DnaK and GrpE are required for fully efficient folding. Also involved, together with DnaK and GrpE, in the DNA replication of plasmids through activation of initiation proteins. This is Chaperone protein DnaJ from Gluconacetobacter diazotrophicus (strain ATCC 49037 / DSM 5601 / CCUG 37298 / CIP 103539 / LMG 7603 / PAl5).